The sequence spans 535 residues: Light-independent protochlorophyllide reductase subunit B (535 aa).

Position 36 (aspartate 36) interacts with [4Fe-4S] cluster. Catalysis depends on aspartate 292, which acts as the Proton donor. Residue 428 to 429 (GL) coordinates substrate. The disordered stretch occupies residues 447–483 (SDDAAKAEPDQPVSNAHGHTESKTVSQGEPIASDEGG).

Belongs to the ChlB/BchB/BchZ family. As to quaternary structure, protochlorophyllide reductase is composed of three subunits; BchL, BchN and BchB. Forms a heterotetramer of two BchB and two BchN subunits. The cofactor is [4Fe-4S] cluster.

The enzyme catalyses chlorophyllide a + oxidized 2[4Fe-4S]-[ferredoxin] + 2 ADP + 2 phosphate = protochlorophyllide a + reduced 2[4Fe-4S]-[ferredoxin] + 2 ATP + 2 H2O. It functions in the pathway porphyrin-containing compound metabolism; bacteriochlorophyll biosynthesis (light-independent). Its function is as follows. Component of the dark-operative protochlorophyllide reductase (DPOR) that uses Mg-ATP and reduced ferredoxin to reduce ring D of protochlorophyllide (Pchlide) to form chlorophyllide a (Chlide). This reaction is light-independent. The NB-protein (BchN-BchB) is the catalytic component of the complex. The chain is Light-independent protochlorophyllide reductase subunit B from Chlorobium phaeobacteroides (strain DSM 266 / SMG 266 / 2430).